The following is a 706-amino-acid chain: Complement C1r-B subcomponent (706 aa).

An N-terminal signal peptide occupies residues M1 to G16. The CUB 1 domain occupies S17–V140. E65, D73, and D118 together coordinate Ca(2+). An intrachain disulfide couples C70 to C88. N-linked (GlcNAc...) asparagine glycosylation is present at N124. The Ca(2+) site is built by D141, L142, and E144. The region spanning D141–Q189 is the EGF-like; calcium-binding domain. 4 disulfides stabilise this stretch: C145-C164, C160-C173, C175-C188, and C192-C219. Residues N166, Y167, and G170 each contribute to the Ca(2+) site. N166 is subject to (3R)-3-hydroxyasparagine. The CUB 2 domain occupies C192–E304. S205 bears the Phosphoserine; by CK2 mark. A glycan (N-linked (GlcNAc...) asparagine) is linked at N220. D242, D252, D289, and D293 together coordinate Ca(2+). A disulfide bond links C249 and C267. 2 Sushi domains span residues I306–I372 and K373–P448. 5 disulfide bridges follow: C308–C357, C337–C370, C375–C428, C405–C446, and C450–C578. Positions I463–G703 constitute a Peptidase S1 domain. Catalysis depends on charge relay system residues H501 and D558. A glycan (N-linked (GlcNAc...) asparagine) is linked at N582. 2 cysteine pairs are disulfide-bonded: C621–C640 and C651–C681. S655 (charge relay system) is an active-site residue.

It belongs to the peptidase S1 family. As to quaternary structure, core component of the complement C1 complex, a calcium-dependent complex composed of 1 molecule of the C1Q subcomplex, 2 molecules of C1R and 2 molecules of C1S. The C1Q subcomplex is composed 18 subunits: 3 chains of C1QA, C1QB, and C1QC trimerize to form 6 collagen-like triple helices connected to six globular ligand-recognition modules. Within the C1 complex, C1R is a dimer of identical chains, each of which is activated by cleavage into two chains, heavy and light, connected by disulfide bonds. In terms of processing, cleaved and activated by autocatalytic processing to generate Complement C1r subcomponent heavy and light chains that are connected by disulfide bonds. Post-translationally, the iron and 2-oxoglutarate dependent 3-hydroxylation of aspartate and asparagine is (R) stereospecific within EGF domains.

The protein resides in the secreted. It localises to the cell surface. It carries out the reaction Selective cleavage of Lys(or Arg)-|-Ile bond in complement subcomponent C1s to form the active form of C1s (EC 3.4.21.42).. Its activity is regulated as follows. Activated by the C1Q subcomplex of the C1 complex following C1Q binding to immunoglobulins (IgG or IgM) complexed with antigens to form antigen-antibody complexes on the surface of pathogens. Immunoglobulin-binding promotes autoactivation of C1R, which results in the cleavage of the Arg-Ile bond in the catalytic domain. In terms of biological role, serine protease component of the complement C1 complex, a multiprotein complex that initiates the classical pathway of the complement system, a cascade of proteins that leads to phagocytosis and breakdown of pathogens and signaling that strengthens the adaptive immune system. C1R catalyzes the first enzymatic step in the classical complement pathway: it is activated by the C1Q subcomplex of the C1 complex, which associates with IgG or IgM immunoglobulins complexed with antigens to form antigen-antibody complexes on the surface of pathogens. Immunoglobulin-binding promotes the autocatalytic cleavage and activation of C1R. Activated C1R then cleaves and activates C1S, the second protease of the classical complement pathway. It is unclear if C1R activates C1S within single, strained C1 complexes or between neighboring C1 complexes on surfaces. This Mus musculus (Mouse) protein is Complement C1r-B subcomponent (C1rb).